The primary structure comprises 121 residues: MNELIKMVGIDYTEQRKKFPDFKAGDTINVHIKISEGKKERIQQFQGVVIQRRNPNTNGETFTVRKISEGIGVERIFPLLSPTIEKIELKQQGLVRRARLFYLQGKQGKAARIKAKITSKA.

It belongs to the bacterial ribosomal protein bL19 family.

Functionally, this protein is located at the 30S-50S ribosomal subunit interface and may play a role in the structure and function of the aminoacyl-tRNA binding site. This Amoebophilus asiaticus (strain 5a2) protein is Large ribosomal subunit protein bL19.